Here is a 341-residue protein sequence, read N- to C-terminus: L-threonine 3-dehydrogenase (341 aa).

Zn(2+) is bound at residue Cys38. Active-site charge relay system residues include Thr40 and His43. The Zn(2+) site is built by His63, Glu64, Cys93, Cys96, Cys99, and Cys107. Residues Ile175, Asp195, Arg200, Leu262–Ile264, and Ile286–Tyr287 each bind NAD(+).

Belongs to the zinc-containing alcohol dehydrogenase family. As to quaternary structure, homotetramer. The cofactor is Zn(2+).

Its subcellular location is the cytoplasm. It catalyses the reaction L-threonine + NAD(+) = (2S)-2-amino-3-oxobutanoate + NADH + H(+). Its pathway is amino-acid degradation; L-threonine degradation via oxydo-reductase pathway; glycine from L-threonine: step 1/2. Catalyzes the NAD(+)-dependent oxidation of L-threonine to 2-amino-3-ketobutyrate. The chain is L-threonine 3-dehydrogenase from Shewanella putrefaciens (strain CN-32 / ATCC BAA-453).